We begin with the raw amino-acid sequence, 347 residues long: GMP reductase (347 aa).

An NADP(+)-binding site is contributed by A108–A131. Residues G181 and G183 each coordinate K(+). C186 acts as the Thioimidate intermediate in catalysis. I216–V239 lines the NADP(+) pocket.

This sequence belongs to the IMPDH/GMPR family. GuaC type 1 subfamily. Homotetramer.

It catalyses the reaction IMP + NH4(+) + NADP(+) = GMP + NADPH + 2 H(+). Catalyzes the irreversible NADPH-dependent deamination of GMP to IMP. It functions in the conversion of nucleobase, nucleoside and nucleotide derivatives of G to A nucleotides, and in maintaining the intracellular balance of A and G nucleotides. The sequence is that of GMP reductase from Shigella boydii serotype 18 (strain CDC 3083-94 / BS512).